A 212-amino-acid polypeptide reads, in one-letter code: MPQTDKQVCIPPELPELLKQFTKAAIRTQPPDLIQWAAEYFGAMSRGEIPPVRERSEQVPLSNWAELTPELLKVLHSRVGGRLIIHADELAQMWKVLNLPTDLFNSVMNVGRFTEEIEWLKFLALACSSLGVTIAKTLKIVCEVLSCDHDGGPPRIPFSTFQFLYTYIAEVDGEISSSHVTRMLNYIEQEVIGPDGLIKVNDFTQNPRVRLE.

An RIIa domain is found at 12-43 (PELPELLKQFTKAAIRTQPPDLIQWAAEYFGA). Position 56 is a phosphoserine (S56). The interval 209–212 (VRLE) is interaction with RHPN1.

Belongs to the ropporin family. In terms of assembly, homodimer. Interacts with AKAP3. May interact with SPA17. Interacts with RHPN1. Interacts with FSCB; the interaction increases upon spermatozoa capacitation conditions. Interacts with CFAP61. Sumoylated, sumoylation decreases upon spermatozoa capacitation conditions.

The protein resides in the cell projection. It is found in the cilium. It localises to the flagellum. In terms of biological role, important for male fertility. With ROPN1L, involved in fibrous sheath integrity and sperm motility, plays a role in PKA-dependent signaling processes required for spermatozoa capacitation. This Rattus norvegicus (Rat) protein is Ropporin-1 (Ropn1).